The following is a 343-amino-acid chain: N-acetyl-gamma-glutamyl-phosphate reductase (343 aa).

The active site involves Cys149.

It belongs to the NAGSA dehydrogenase family. Type 1 subfamily.

The protein localises to the cytoplasm. The catalysed reaction is N-acetyl-L-glutamate 5-semialdehyde + phosphate + NADP(+) = N-acetyl-L-glutamyl 5-phosphate + NADPH + H(+). It participates in amino-acid biosynthesis; L-arginine biosynthesis; N(2)-acetyl-L-ornithine from L-glutamate: step 3/4. In terms of biological role, catalyzes the NADPH-dependent reduction of N-acetyl-5-glutamyl phosphate to yield N-acetyl-L-glutamate 5-semialdehyde. This is N-acetyl-gamma-glutamyl-phosphate reductase from Methanococcus maripaludis (strain C5 / ATCC BAA-1333).